The following is a 444-amino-acid chain: Phosphoglucosamine mutase (444 aa).

The active-site Phosphoserine intermediate is Ser99. Residues Ser99, Asp242, Asp244, and Asp246 each coordinate Mg(2+). Ser99 is subject to Phosphoserine.

This sequence belongs to the phosphohexose mutase family. It depends on Mg(2+) as a cofactor. Activated by phosphorylation.

The enzyme catalyses alpha-D-glucosamine 1-phosphate = D-glucosamine 6-phosphate. Functionally, catalyzes the conversion of glucosamine-6-phosphate to glucosamine-1-phosphate. This chain is Phosphoglucosamine mutase, found in Aliarcobacter butzleri (strain RM4018) (Arcobacter butzleri).